The chain runs to 572 residues: Proline--tRNA ligase (572 aa).

It belongs to the class-II aminoacyl-tRNA synthetase family. ProS type 1 subfamily. As to quaternary structure, homodimer.

The protein localises to the cytoplasm. It catalyses the reaction tRNA(Pro) + L-proline + ATP = L-prolyl-tRNA(Pro) + AMP + diphosphate. Catalyzes the attachment of proline to tRNA(Pro) in a two-step reaction: proline is first activated by ATP to form Pro-AMP and then transferred to the acceptor end of tRNA(Pro). As ProRS can inadvertently accommodate and process non-cognate amino acids such as alanine and cysteine, to avoid such errors it has two additional distinct editing activities against alanine. One activity is designated as 'pretransfer' editing and involves the tRNA(Pro)-independent hydrolysis of activated Ala-AMP. The other activity is designated 'posttransfer' editing and involves deacylation of mischarged Ala-tRNA(Pro). The misacylated Cys-tRNA(Pro) is not edited by ProRS. The chain is Proline--tRNA ligase from Salmonella dublin (strain CT_02021853).